We begin with the raw amino-acid sequence, 351 residues long: tRNA-splicing endonuclease (351 aa).

Catalysis depends on residues tyrosine 287, histidine 298, and lysine 329.

It belongs to the tRNA-intron endonuclease family. Archaeal long subfamily. Homodimer.

It catalyses the reaction pretRNA = a 3'-half-tRNA molecule with a 5'-OH end + a 5'-half-tRNA molecule with a 2',3'-cyclic phosphate end + an intron with a 2',3'-cyclic phosphate and a 5'-hydroxyl terminus.. Endonuclease that removes tRNA introns. Cleaves pre-tRNA at the 5'- and 3'-splice sites to release the intron. The products are an intron and two tRNA half-molecules bearing 2',3' cyclic phosphate and 5'-OH termini. Recognizes a pseudosymmetric substrate in which 2 bulged loops of 3 bases are separated by a stem of 4 bp. This Methanococcoides burtonii (strain DSM 6242 / NBRC 107633 / OCM 468 / ACE-M) protein is tRNA-splicing endonuclease.